The primary structure comprises 268 residues: Gasdermin bGSDM (268 aa).

The S-palmitoyl cysteine moiety is linked to residue C3. 4 beta stranded membrane passes run 78-94 (IDLRKTNSLSSAVAAKI), 103-121 (APSFDLAFENSSSVIFHIE), 168-185 (KMRMQFERKNKGELGVDV), and 195-211 (AKLESKIEGSTYDRLVF). Residues 248–268 (GENMALNLFTEIQDAGFIEVT) are C-terminal region.

The protein belongs to the bacterial gasdermin family. As to quaternary structure, monomer in solution. In terms of assembly, forms large, homooligomeric ring-shaped pores when inserted in membranes. Cleavage by the adjacently encoded protease (G563DRAFT_02009) between Leu-247 and Gly-248 relieves autoinhibition, releasing the N-terminus which initiates loss of cell integrity. Post-translationally, palmitoylation helps stabilize the inactive state; may self-palmitoylate. Palmitoylation is not required for permeabilization of liposomes by the ring-like pores in vitro. Palmitoylation plays a significant role in pore formation.

The protein localises to the cytoplasm. Its subcellular location is the cell inner membrane. Its activity is regulated as follows. The full-length protein before cleavage is inactive: intramolecular interactions between the N-terminal domain and the C-terminal region, as well as the lipid modification, mediate autoinhibition. The pyroptosis-like-inducing activity is carried by the released N-terminal domain (gasdermin bGSDM, N-terminus). In terms of biological role, precursor of a pore-forming protein involved in defense against bacteriophages. Cleavage of this precursor by its dedicated, neighboring protease (G563DRAFT_02009) releases the active moiety (gasdermin bGSDM, N-terminus) which inserts into membranes, forming pores and triggering cell death. Expression of bGSDM and its protease is highly toxic in E.coli. Cells expressing the gene pair stop dividing and lose membrane integrity. Both proteins are required to kill E.coli. Functionally, pore-forming protein that causes membrane permeabilization via a pyroptosis-like activity. Makes ring-like pores with walls about 50 Angstroms thick and an interior pore diameter of 200-300 Angstroms, when integrated in liposomes. In Runella zeae (strain ATCC BAA-293 / DSM 19591 / LMG 21438 / NS12), this protein is Gasdermin bGSDM.